Here is a 186-residue protein sequence, read N- to C-terminus: uncharacterized protein (186 aa).

A signal peptide spans 1–21 (MIHVKYIILGFIMVSSLNLYA).

This is an uncharacterized protein from Rickettsia conorii (strain ATCC VR-613 / Malish 7).